The chain runs to 362 residues: Serpentine receptor class epsilon-37 (362 aa).

The next 7 membrane-spanning stretches (helical) occupy residues 29–49, 67–87, 127–147, 170–190, 204–224, 260–280, and 288–308; these read IFYV…YILV, IMMC…IVLI, IYFA…AVLA, IPIL…YQTT, IFIG…NLAW, LVVS…VLLF, and FFVH…SLTL.

This sequence belongs to the nematode receptor-like protein sre family.

It localises to the membrane. This Caenorhabditis elegans protein is Serpentine receptor class epsilon-37 (sre-37).